A 101-amino-acid chain; its full sequence is Small ribosomal subunit protein uS14 (101 aa).

Residues Met1–Asn10 show a composition bias toward basic and acidic residues. Residues Met1–Lys23 are disordered. A compositionally biased stretch (basic residues) spans Asn11–Lys23.

This sequence belongs to the universal ribosomal protein uS14 family. Part of the 30S ribosomal subunit. Contacts proteins S3 and S10.

In terms of biological role, binds 16S rRNA, required for the assembly of 30S particles and may also be responsible for determining the conformation of the 16S rRNA at the A site. This is Small ribosomal subunit protein uS14 from Nitrobacter winogradskyi (strain ATCC 25391 / DSM 10237 / CIP 104748 / NCIMB 11846 / Nb-255).